Reading from the N-terminus, the 845-residue chain is Receptor-like protein Cf-9 homolog (845 aa).

The N-terminal stretch at 1-19 (MGCVKLVFFMLLKLDLLEF) is a signal peptide. An N-cap region spans residues 20–70 (KNMFTVNPNASDYCYDYTDQRMQSYPRTLFWNKSTDCCSWDGIHCDETTGQ). Over 20–794 (KNMFTVNPNA…EEDSPMISWQ (775 aa)) the chain is Extracellular. Residues asparagine 28, asparagine 51, and asparagine 88 are each glycosylated (N-linked (GlcNAc...) asparagine). The stretch at 71–94 (VVELDLRCSQLQGKFHSNSSLFQL) is one LRR 1; degenerate repeat. LRR repeat units lie at residues 95-118 (SNLK…KFGE), 119-143 (FSDL…ISHL), 144-171 (SKLH…LKNL), 172-193 (TQLR…SNFS), 194-217 (SHLT…VFHL), 219-242 (DLEF…KWNS), 244-266 (ASLM…SFSH), 267-291 (LTSL…LWNL), 292-316 (TNIE…RFEK), 318-338 (KRLS…SFNR), 340-364 (WTQL…VSGL), 365-388 (QNLG…IFSL), 390-410 (SLVV…EFKS), 411-434 (KTLS…LLNQ), 436-458 (SLQF…ICNL), 459-482 (KTLM…VGER), 484-506 (EYLL…TFSI), 507-531 (GNSF…LINC), 532-554 (KYLK…WLGY), 555-579 (LSQL…GSTN), 581-605 (FMRL…ILGN), 649-672 (LDSN…IIGD), 673-696 (LVGL…SFQN), 698-721 (SVLE…LASL), and 723-741 (FLEV…IPKG). Asparagine 131, asparagine 170, asparagine 183, and asparagine 191 each carry an N-linked (GlcNAc...) asparagine glycan. N-linked (GlcNAc...) asparagine glycosylation is present at asparagine 241. Residues asparagine 279 and asparagine 290 are each glycosylated (N-linked (GlcNAc...) asparagine). N-linked (GlcNAc...) asparagine glycosylation is found at asparagine 337, asparagine 360, asparagine 378, and asparagine 398. N-linked (GlcNAc...) asparagine glycosylation occurs at asparagine 446. An N-linked (GlcNAc...) asparagine glycan is attached at asparagine 501. The N-linked (GlcNAc...) asparagine glycan is linked to asparagine 545. Asparagine 656, asparagine 680, and asparagine 696 each carry an N-linked (GlcNAc...) asparagine glycan. 2 N-linked (GlcNAc...) asparagine glycosylation sites follow: asparagine 728 and asparagine 749. The segment at 742-794 (KQFDSFGNTSYQGNDGLRGFPLSKLCGVDDQVTTPAELDQEEEEEDSPMISWQ) is C-cap/acidic domain. Residues 795–815 (GVLVGYGCGLVIGLSVIYIMW) traverse the membrane as a helical segment. Residues 816-845 (STQYPAWFSRMDLKLEHIITTRMKKHKKRY) are Cytoplasmic-facing.

This sequence belongs to the RLP family.

It is found in the cell membrane. In terms of biological role, at the opposite of its homolog Cf-9 found in S.pimpinellifolium, was not able to confer resistance to the fungal pathogen C.fulvum. The chain is Receptor-like protein Cf-9 homolog from Solanum lycopersicum (Tomato).